The sequence spans 433 residues: Pyrimidine-nucleoside phosphorylase (433 aa).

Lys81–Ser83 is a phosphate binding site. Residues Gly88 and Thr90 each contribute to the K(+) site. Residues Thr92, Lys108–Ser110, and Thr120 each bind phosphate. 2 residues coordinate substrate: Arg168 and Lys187. K(+) contacts are provided by Leu243, Ala246, and Glu255.

This sequence belongs to the thymidine/pyrimidine-nucleoside phosphorylase family. In terms of assembly, homodimer. K(+) serves as cofactor.

It carries out the reaction uridine + phosphate = alpha-D-ribose 1-phosphate + uracil. It catalyses the reaction thymidine + phosphate = 2-deoxy-alpha-D-ribose 1-phosphate + thymine. The enzyme catalyses 2'-deoxyuridine + phosphate = 2-deoxy-alpha-D-ribose 1-phosphate + uracil. In terms of biological role, catalyzes phosphorolysis of the pyrimidine nucleosides uridine, thymidine and 2'-deoxyuridine with the formation of the corresponding pyrimidine base and ribose-1-phosphate. The chain is Pyrimidine-nucleoside phosphorylase (pdp) from Staphylococcus aureus (strain MSSA476).